The primary structure comprises 1379 residues: Protein three rows (1379 aa).

Residues 1031 to 1037 form a separase cleavage-site region; sequence VEPIRKQ. Disordered stretches follow at residues 1206 to 1231, 1248 to 1309, and 1328 to 1379; these read PEDKKRTATGSVSAVKNTASKVKQSA, PSAT…ATSK, and ITTS…RHRH. Residues 1213–1228 show a composition bias toward polar residues; that stretch reads ATGSVSAVKNTASKVK. The span at 1248–1267 shows a compositional bias: low complexity; it reads PSATSCSSSGGSGTENTPPS.

In terms of assembly, interacts with pim and Sse. Cleavage of thr contributes to inactivation of Sse. Post-translationally, proteolytically cleaved after the metaphase-to-anaphase transition, C-terminal cleavage product is degraded. Cleavage can only proceed within complexes that contain active Sse. During embryogenesis, expressed in Malpighian tubule buds, and epithelia of foregut and hindgut.

Its subcellular location is the cytoplasm. Its function is as follows. Required specifically for chromosome disjunction during all mitoses; maternally provided protein is sufficient until mitosis 14 then zygotic protein is required. Involved in formation and/or maintenance of epithelial structures: bud extension during Malpighian tubule development, and foregut and hindgut morphogenesis. This Drosophila melanogaster (Fruit fly) protein is Protein three rows (thr).